An 83-amino-acid polypeptide reads, in one-letter code: Gas vesicle protein G (83 aa).

The protein belongs to the gas vesicle GvpG family. As to quaternary structure, gvpF to GvpM interact with each other in vitro, and may form multi-subunit complex(es).

It is found in the gas vesicle. Its function is as follows. Proteins GvpF to GvpM might be involved in nucleating gas vesicle formation. A minor component of the gas vesicle. Gas vesicles are hollow, gas filled proteinaceous nanostructures found in some microorganisms. They allow positioning of halobacteria at the optimal depth for growth in the poorly aerated, shallow brine pools of their habitat. In terms of biological role, expression of a 9.5 kb mc-vac DNA fragment containing 2 divergently transcribed regions (gvpD-gvpE-gvpF-gvpG-gvpH-gvpI-gvpJ-gvpK-gvpL-gvpM and gvpA-gvpC-gvpN-gvpO) allows H.volcanii to produce gas vesicles. This Haloferax mediterranei (strain ATCC 33500 / DSM 1411 / JCM 8866 / NBRC 14739 / NCIMB 2177 / R-4) (Halobacterium mediterranei) protein is Gas vesicle protein G.